We begin with the raw amino-acid sequence, 151 residues long: Lipoprotein signal peptidase (151 aa).

3 consecutive transmembrane segments (helical) span residues 33 to 53 (VIPDFFHLTYVLNPGAAFGLL), 58 to 78 (WIFIPAAIIVCAGIIYAQFKI), and 87 to 107 (LTLGLIGGGALGNLYDRLFIG). Catalysis depends on residues Asp111 and Asp126. Residues 120–140 (FVFNFADSAIVVGVGLLMILM) form a helical membrane-spanning segment.

Belongs to the peptidase A8 family.

Its subcellular location is the cell membrane. It catalyses the reaction Release of signal peptides from bacterial membrane prolipoproteins. Hydrolyzes -Xaa-Yaa-Zaa-|-(S,diacylglyceryl)Cys-, in which Xaa is hydrophobic (preferably Leu), and Yaa (Ala or Ser) and Zaa (Gly or Ala) have small, neutral side chains.. It functions in the pathway protein modification; lipoprotein biosynthesis (signal peptide cleavage). This protein specifically catalyzes the removal of signal peptides from prolipoproteins. This Desulfitobacterium hafniense (strain DSM 10664 / DCB-2) protein is Lipoprotein signal peptidase.